The chain runs to 124 residues: ATP synthase subunit H, mitochondrial (124 aa).

The N-terminal 32 residues, 1–32 (MFPIASRRILLNASVLPLRLCNRNFTTTRISY), are a transit peptide targeting the mitochondrion. The disordered stretch occupies residues 89-124 (NVETAHVAKESEEGESEPIEEDWLVLDDAEETKESH). The segment covering 100 to 124 (EEGESEPIEEDWLVLDDAEETKESH) has biased composition (acidic residues).

The protein belongs to the ATPase h subunit family. F-type ATPases have 2 components, CF(1) - the catalytic core - and CF(0) - the membrane proton channel. In yeast, the dimeric form of ATP synthase consists of 17 polypeptides: alpha, beta, gamma, delta, epsilon, 4 (B), 5 (OSCP), 6 (A), 8, 9 (C), d, E (Tim11), f, g, h, i/j and k.

It localises to the mitochondrion. The protein localises to the mitochondrion inner membrane. In terms of biological role, mitochondrial membrane ATP synthase (F(1)F(0) ATP synthase or Complex V) produces ATP from ADP in the presence of a proton gradient across the membrane which is generated by electron transport complexes of the respiratory chain. F-type ATPases consist of two structural domains, F(1) - containing the extramembraneous catalytic core and F(0) - containing the membrane proton channel, linked together by a central stalk and a peripheral stalk. During catalysis, ATP synthesis in the catalytic domain of F(1) is coupled via a rotary mechanism of the central stalk subunits to proton translocation. Part of the complex F(0) domain. Minor subunit located with subunit a in the membrane. This chain is ATP synthase subunit H, mitochondrial (ATP14), found in Saccharomyces cerevisiae (strain ATCC 204508 / S288c) (Baker's yeast).